The chain runs to 230 residues: Cytidylate kinase (230 aa).

ATP is bound at residue 10 to 18 (GPAGSGKST).

Belongs to the cytidylate kinase family. Type 1 subfamily.

The protein resides in the cytoplasm. The catalysed reaction is CMP + ATP = CDP + ADP. The enzyme catalyses dCMP + ATP = dCDP + ADP. This Leptospira borgpetersenii serovar Hardjo-bovis (strain L550) protein is Cytidylate kinase.